A 204-amino-acid chain; its full sequence is MSTQSTHPPKPEAPRLPPAISSCQRRHTLPASEFRCLTPEDAVSAFEIEREAFISVLGVCPLYLDEIRHFLTLCPELSLGWFEEGCLVAFIIGSLWDKDRLMQESLTMHRPGGHIAHLHVLAVHCAFRQQGRGPILLWRYLHHLGSQPAVHRAALMCEDALVPFYERFGFHAMGPCAITVGSLSFTELHCSLQGHPFLRRNSGC.

T28 carries the post-translational modification Phosphothreonine; by PKA. Residues 32–193 (SEFRCLTPED…SFTELHCSLQ (162 aa)) enclose the N-acetyltransferase domain. L121 contributes to the substrate binding site. Acetyl-CoA is bound by residues 121 to 123 (LAV) and 129 to 134 (QQGRGP). M156 is a substrate binding site. 165-167 (YER) is a binding site for acetyl-CoA. S202 carries the post-translational modification Phosphoserine.

The protein belongs to the acetyltransferase family. AANAT subfamily. Monomer. Interacts with several 14-3-3 proteins, including YWHAB, YWHAE, YWHAG and YWHAZ, preferentially when phosphorylated at Thr-28. Phosphorylation on Ser-202 also allows binding to YWHAZ, but with lower affinity. The interaction with YWHAZ considerably increases affinity for arylalkylamines and acetyl-CoA and protects the enzyme from dephosphorylation and proteasomal degradation. It may also prevent thiol-dependent inactivation. CAMP-dependent phosphorylation regulates AANAT activity by promoting interaction with 14-3-3 proteins. Phosphorylation levels exhibit night/day variations, with an increase during nighttime. Highly expressed in pineal gland and in the photoreceptor outer segments in the retina. Expressed at about 100-fold lower levels in the pituitary gland and testis. Not detected in other tissues.

The protein resides in the cytoplasm. It carries out the reaction a 2-arylethylamine + acetyl-CoA = an N-acetyl-2-arylethylamine + CoA + H(+). It functions in the pathway aromatic compound metabolism; melatonin biosynthesis; melatonin from serotonin: step 1/2. Functionally, controls the night/day rhythm of melatonin production in the pineal gland. Catalyzes the N-acetylation of serotonin into N-acetylserotonin, the penultimate step in the synthesis of melatonin. In Macaca mulatta (Rhesus macaque), this protein is Serotonin N-acetyltransferase (AANAT).